We begin with the raw amino-acid sequence, 258 residues long: UPF0758 protein Bcep1808_2579 (258 aa).

The MPN domain occupies 136–258 (PIDSPGAVED…TFSFARAGWL (123 aa)). His207, His209, and Asp220 together coordinate Zn(2+). The JAMM motif motif lies at 207-220 (HNHPSGAVQPSAED).

It belongs to the UPF0758 family.

The chain is UPF0758 protein Bcep1808_2579 from Burkholderia vietnamiensis (strain G4 / LMG 22486) (Burkholderia cepacia (strain R1808)).